Consider the following 310-residue polypeptide: Methionyl-tRNA formyltransferase (310 aa).

(6S)-5,6,7,8-tetrahydrofolate is bound at residue 109–112 (SLLP).

This sequence belongs to the Fmt family.

The enzyme catalyses L-methionyl-tRNA(fMet) + (6R)-10-formyltetrahydrofolate = N-formyl-L-methionyl-tRNA(fMet) + (6S)-5,6,7,8-tetrahydrofolate + H(+). In terms of biological role, attaches a formyl group to the free amino group of methionyl-tRNA(fMet). The formyl group appears to play a dual role in the initiator identity of N-formylmethionyl-tRNA by promoting its recognition by IF2 and preventing the misappropriation of this tRNA by the elongation apparatus. The chain is Methionyl-tRNA formyltransferase from Pseudomonas paraeruginosa (strain DSM 24068 / PA7) (Pseudomonas aeruginosa (strain PA7)).